The following is a 390-amino-acid chain: Histamine H4 receptor (390 aa).

At 1-19 the chain is on the extracellular side; it reads MPDTNSTINLSLSTRVTLA. 2 N-linked (GlcNAc...) asparagine glycosylation sites follow: N5 and N9. A helical transmembrane segment spans residues 20-40; it reads FFMSLVAFAIMLGNALVILAF. Over 41-52 the chain is Cytoplasmic; it reads VVDKNLRHRSSY. A helical transmembrane segment spans residues 53 to 73; that stretch reads FFLNLAISDFFVGVISIPLYI. The Extracellular segment spans residues 74–87; it reads PHTLFEWDFGKEIC. C87 and C164 are disulfide-bonded. A helical membrane pass occupies residues 88 to 108; it reads VFWLTTDYLLCTASVYNIVLI. The Cytoplasmic portion of the chain corresponds to 109 to 131; the sequence is SYDRYLSVSNAVSYRTQHTGVLK. The chain crosses the membrane as a helical span at residues 132–152; the sequence is IVTLMVAVWVLAFLVNGPMIL. The Extracellular portion of the chain corresponds to 153–172; it reads VSESWKDEGSECEPGFFSEW. Residues 173 to 193 traverse the membrane as a helical segment; sequence YILAITSFLEFVIPVILVAYF. The Cytoplasmic segment spans residues 194 to 304; that stretch reads NMNIYWSLWK…LLRARRLAKS (111 aa). A helical membrane pass occupies residues 305 to 325; the sequence is LAILLGVFAVCWAPYSLFTIV. The Extracellular portion of the chain corresponds to 326–341; sequence LSFYSSATGPKSVWYR. The chain crosses the membrane as a helical span at residues 342 to 362; the sequence is IAFWLQWFNSFVNPLLYPLCH. At 363 to 390 the chain is on the cytoplasmic side; sequence KRFQKAFLKIFCIKKQPLPSQHSRSVSS.

Belongs to the G-protein coupled receptor 1 family. Interacts with TSPAN4. As to expression, expressed primarily in the bone marrow and eosinophils. Shows preferential distribution in cells of immunological relevance such as T-cells, dendritic cells, monocytes, mast cells, neutrophils. Also expressed in a wide variety of peripheral tissues, including the heart, kidney, liver, lung, pancreas, skeletal muscle, prostate, small intestine, spleen, testis, colon, fetal liver and lymph node.

It localises to the cell membrane. In terms of biological role, the H4 subclass of histamine receptors could mediate the histamine signals in peripheral tissues. Displays a significant level of constitutive activity (spontaneous activity in the absence of agonist). The polypeptide is Histamine H4 receptor (HRH4) (Homo sapiens (Human)).